We begin with the raw amino-acid sequence, 406 residues long: Solute carrier family 22 member 18 (406 aa).

Transmembrane regions (helical) follow at residues 8–28, 43–63, 85–105, 140–160, 168–188, 226–246, 258–278, 295–315, 316–336, and 374–394; these read GIII…FMQF, VSFG…GPVF, ALYL…FLLF, LGLC…TLNT, AILA…CVPA, FLVK…FSII, AGYL…LVIG, LVFA…HFCF, LMPG…SMLT, and GVPI…LVLW.

The protein belongs to the major facilitator (TC 2.A.1) superfamily. Organic cation transporter (TC 2.A.1.19) family. In terms of assembly, interacts with RNF167. As to expression, expressed at high levels in fetal and adult kidney and liver, and extraembryonic membranes (yolk sac). Expressed at moderate levels in intestine, heart, lung and testis.

The protein resides in the apical cell membrane. Functionally, may act as a transporter of organic cations based on a proton efflux antiport mechanism. May play a role in the transport of chloroquine and quinidine-related compounds in kidney. Plays a role in the regulation of lipid metabolism. This Mus musculus (Mouse) protein is Solute carrier family 22 member 18 (Slc67a1).